The primary structure comprises 570 residues: Zinc finger protein 76 (570 aa).

A Glycyl lysine isopeptide (Lys-Gly) (interchain with G-Cter in SUMO2) cross-link involves residue K24. A run of 3 repeats spans residues 34 to 45 (IQLEDGTTAYIH), 62 to 73 (VQLEDGSMAYIH), and 88 to 99 (VQLEDGSTAYIH). The tract at residues 34 to 99 (IQLEDGTTAY…LEDGSTAYIH (66 aa)) is 3 X 12 AA approximate repeats. 7 C2H2-type zinc fingers span residues 165 to 189 (FRCG…ERAH), 195 to 219 (YRCD…VRTH), 225 to 249 (YKCP…VRTH), 255 to 279 (FQCP…VRTH), 285 to 309 (YTCP…VRIH), 315 to 339 (YVCT…HVVH), and 345 to 368 (YTCS…RSAH). The segment at 365 to 401 (RSAHGELEATEESEQALYEQQQLEAASAAEESPPPKR) is disordered. Low complexity predominate over residues 379–395 (QALYEQQQLEAASAAEE).

The protein belongs to the krueppel C2H2-type zinc-finger protein family. In terms of tissue distribution, testis.

It is found in the nucleus. In terms of biological role, may be involved in transcriptional regulation. The chain is Zinc finger protein 76 (ZNF76) from Homo sapiens (Human).